We begin with the raw amino-acid sequence, 218 residues long: 3,4-dihydroxy-2-butanone 4-phosphate synthase (218 aa).

Residues 37-38, D42, 150-154, and E174 contribute to the D-ribulose 5-phosphate site; these read RE and RGGHT. E38 contacts Mg(2+). Mg(2+) is bound at residue H153.

Belongs to the DHBP synthase family. As to quaternary structure, homodimer. Mg(2+) is required as a cofactor. The cofactor is Mn(2+).

The catalysed reaction is D-ribulose 5-phosphate = (2S)-2-hydroxy-3-oxobutyl phosphate + formate + H(+). It functions in the pathway cofactor biosynthesis; riboflavin biosynthesis; 2-hydroxy-3-oxobutyl phosphate from D-ribulose 5-phosphate: step 1/1. Its function is as follows. Catalyzes the conversion of D-ribulose 5-phosphate to formate and 3,4-dihydroxy-2-butanone 4-phosphate. This chain is 3,4-dihydroxy-2-butanone 4-phosphate synthase, found in Erwinia tasmaniensis (strain DSM 17950 / CFBP 7177 / CIP 109463 / NCPPB 4357 / Et1/99).